The primary structure comprises 313 residues: uncharacterized protein (313 aa).

A run of 9 helical transmembrane segments spans residues 31 to 53 (AWGI…GWLF), 62 to 84 (LFLF…WNPY), 104 to 126 (VFFW…IYTS), 147 to 161 (FALL…NQSV), 166 to 185 (SMFW…SFLL), 198 to 220 (RVLK…ALRF), 225 to 244 (SFSG…YLII), 264 to 282 (FFAA…TSSF), and 286 to 308 (PAAM…SILI).

Its subcellular location is the cell membrane. This is an uncharacterized protein from Archaeoglobus fulgidus (strain ATCC 49558 / DSM 4304 / JCM 9628 / NBRC 100126 / VC-16).